A 116-amino-acid polypeptide reads, in one-letter code: Phosphoribosyl-AMP cyclohydrolase (116 aa).

Asp81 is a binding site for Mg(2+). Cys82 is a Zn(2+) binding site. Positions 83 and 85 each coordinate Mg(2+). Positions 98 and 105 each coordinate Zn(2+).

This sequence belongs to the PRA-CH family. In terms of assembly, homodimer. The cofactor is Mg(2+). Zn(2+) serves as cofactor.

The protein localises to the cytoplasm. The enzyme catalyses 1-(5-phospho-beta-D-ribosyl)-5'-AMP + H2O = 1-(5-phospho-beta-D-ribosyl)-5-[(5-phospho-beta-D-ribosylamino)methylideneamino]imidazole-4-carboxamide. Its pathway is amino-acid biosynthesis; L-histidine biosynthesis; L-histidine from 5-phospho-alpha-D-ribose 1-diphosphate: step 3/9. Functionally, catalyzes the hydrolysis of the adenine ring of phosphoribosyl-AMP. The sequence is that of Phosphoribosyl-AMP cyclohydrolase from Mycolicibacterium vanbaalenii (strain DSM 7251 / JCM 13017 / BCRC 16820 / KCTC 9966 / NRRL B-24157 / PYR-1) (Mycobacterium vanbaalenii).